A 119-amino-acid chain; its full sequence is Chorion class CA protein ERA.2 (119 aa).

Residues 1 to 21 (MSKLVVFLFCIQVCFIQNVYS) form the signal peptide. Residues 22-55 (QCLGRVGPGGPPLGPYGGPLGGPGYGPVGYGGCG) are left arm. The central domain stretch occupies residues 56–103 (GYGGSGIGNVAVAGELPVAGSTGVTGQVPVIGAVEFAGPACAVGSVSI). A right arm region spans residues 104–119 (SGACGPTCGCGGSPFY).

It belongs to the chorion protein family.

This protein is one of many from the eggshell of the silk moth. The polypeptide is Chorion class CA protein ERA.2 (ERA.2) (Bombyx mori (Silk moth)).